The primary structure comprises 118 residues: Holo-[acyl-carrier-protein] synthase (118 aa).

Residues Asp-8 and Glu-58 each contribute to the Mg(2+) site.

The protein belongs to the P-Pant transferase superfamily. AcpS family. Mg(2+) is required as a cofactor.

It localises to the cytoplasm. The catalysed reaction is apo-[ACP] + CoA = holo-[ACP] + adenosine 3',5'-bisphosphate + H(+). Functionally, transfers the 4'-phosphopantetheine moiety from coenzyme A to a Ser of acyl-carrier-protein. This Listeria welshimeri serovar 6b (strain ATCC 35897 / DSM 20650 / CCUG 15529 / CIP 8149 / NCTC 11857 / SLCC 5334 / V8) protein is Holo-[acyl-carrier-protein] synthase.